Here is a 387-residue protein sequence, read N- to C-terminus: Dual specificity mitogen-activated protein kinase kinase mek-2 (387 aa).

Residues 1–37 (MSSGKRRNPLGLSLPPTVNEQSESGEATAEEATATVP) form a disordered region. Positions 16 to 25 (PTVNEQSESG) are enriched in polar residues. Residues 26–35 (EATAEEATAT) show a composition bias toward low complexity. Residues 73 to 360 (LQTEGELGHG…LKSLTADVFF (288 aa)) enclose the Protein kinase domain. ATP-binding positions include 79-87 (LGHGNGGVV) and K102. D195 functions as the Proton acceptor in the catalytic mechanism. Phosphoserine occurs at positions 223 and 227.

It belongs to the protein kinase superfamily. STE Ser/Thr protein kinase family. MAP kinase kinase subfamily. As to quaternary structure, interacts with ksr-1.

The catalysed reaction is L-seryl-[protein] + ATP = O-phospho-L-seryl-[protein] + ADP + H(+). It carries out the reaction L-threonyl-[protein] + ATP = O-phospho-L-threonyl-[protein] + ADP + H(+). The enzyme catalyses L-tyrosyl-[protein] + ATP = O-phospho-L-tyrosyl-[protein] + ADP + H(+). Activated by tyrosine and threonine phosphorylation catalyzed by MAP kinase kinase kinases. Its function is as follows. Functions in the let-60 Ras signaling pathway; acts downstream of lin-45 raf kinase, but before the sur-1/mpk-1 gene product in controlling vulval cell differentiation. Required for progression of developing oocytes through the pachytene stage. Plays a role in responses to M.nematophilum-mediated bacterial infection by promoting tail swelling and preventing constipation. Involved in fluid homeostasis. Positively regulates lifespan upstream of mpk-1. The protein is Dual specificity mitogen-activated protein kinase kinase mek-2 (mek-2) of Caenorhabditis elegans.